Reading from the N-terminus, the 586-residue chain is Arrestin-related trafficking adapter 5 (586 aa).

Disordered regions lie at residues glycine 123–threonine 145 and glutamate 182–arginine 217. Residues alanine 126–threonine 145 show a composition bias toward polar residues. The segment covering serine 199–asparagine 216 has biased composition (low complexity). Lysine 364 is covalently cross-linked (Glycyl lysine isopeptide (Lys-Gly) (interchain with G-Cter in ubiquitin)).

The protein belongs to the arrestin family. In terms of assembly, interacts with RSP5. Post-translationally, ubiquitinated by RSP5.

In terms of biological role, may regulate endocytosis by recruiting RSP5 ubiquitin ligase activity to specific plasma membrane proteins in response to extracellular stimuli. The sequence is that of Arrestin-related trafficking adapter 5 (ART5) from Saccharomyces cerevisiae (strain ATCC 204508 / S288c) (Baker's yeast).